The primary structure comprises 191 residues: Thymidine kinase (191 aa).

Residues 15–22 and 88–91 contribute to the ATP site; these read GSMFSGKS and DEVQ. Glutamate 89 serves as the catalytic Proton acceptor. The Zn(2+) site is built by cysteine 145, cysteine 148, cysteine 183, and histidine 186.

Belongs to the thymidine kinase family. In terms of assembly, homotetramer.

The protein resides in the cytoplasm. The enzyme catalyses thymidine + ATP = dTMP + ADP + H(+). The sequence is that of Thymidine kinase from Macrococcus caseolyticus (strain JCSC5402) (Macrococcoides caseolyticum).